The chain runs to 355 residues: Ribosomal RNA small subunit methyltransferase H (355 aa).

S-adenosyl-L-methionine is bound by residues 47–49 (GGY), aspartate 65, phenylalanine 92, aspartate 113, and glutamine 120. Residues 332–355 (LLPLATLPETSHPKSASHSKSRRR) are disordered. Basic residues predominate over residues 346-355 (SASHSKSRRR).

This sequence belongs to the methyltransferase superfamily. RsmH family.

It localises to the cytoplasm. It carries out the reaction cytidine(1402) in 16S rRNA + S-adenosyl-L-methionine = N(4)-methylcytidine(1402) in 16S rRNA + S-adenosyl-L-homocysteine + H(+). Functionally, specifically methylates the N4 position of cytidine in position 1402 (C1402) of 16S rRNA. This Beijerinckia indica subsp. indica (strain ATCC 9039 / DSM 1715 / NCIMB 8712) protein is Ribosomal RNA small subunit methyltransferase H.